Here is a 460-residue protein sequence, read N- to C-terminus: Citrate synthase, peroxisomal (460 aa).

Ser21 carries the phosphoserine modification. Glycyl lysine isopeptide (Lys-Gly) (interchain with G-Cter in ubiquitin) cross-links involve residues Lys218 and Lys239. Active-site residues include His293 and His339. Glycyl lysine isopeptide (Lys-Gly) (interchain with G-Cter in ubiquitin) cross-links involve residues Lys354 and Lys385. Asp394 is an active-site residue. Residues 458–460 carry the C-terminal peroxisome targeting signal (PTS1) motif; sequence SKL.

This sequence belongs to the citrate synthase family. Interacts with F-box protein UCC1. In terms of processing, ubiquitinated by the E3 ubiquitin-protein ligase complex SCF(UCC1), which leads to its degradation by the proteasome. Ubiquitination is prevented by oxaloacetate, suggesting the existence of an oxaloacetate-dependent positive feedback loop that stabilizes CIT2.

Its subcellular location is the cytoplasm. The protein localises to the peroxisome. The enzyme catalyses oxaloacetate + acetyl-CoA + H2O = citrate + CoA + H(+). The protein operates within carbohydrate metabolism; tricarboxylic acid cycle; isocitrate from oxaloacetate: step 1/2. Functionally, peroxisomal citrate synthase involved in the citrate homeostasis. Catalyzes the condensation of acetyl coenzyme A and oxaloacetate to form citrate. Citrate synthase is the rate-limiting enzyme of the tricarboxylic acid (TCA) cycle. The sequence is that of Citrate synthase, peroxisomal from Saccharomyces cerevisiae (strain ATCC 204508 / S288c) (Baker's yeast).